Consider the following 485-residue polypeptide: Glycogen synthase (485 aa).

ADP-alpha-D-glucose is bound at residue Lys17.

The protein belongs to the glycosyltransferase 1 family. Bacterial/plant glycogen synthase subfamily.

It catalyses the reaction [(1-&gt;4)-alpha-D-glucosyl](n) + ADP-alpha-D-glucose = [(1-&gt;4)-alpha-D-glucosyl](n+1) + ADP + H(+). Its pathway is glycan biosynthesis; glycogen biosynthesis. In terms of biological role, synthesizes alpha-1,4-glucan chains using ADP-glucose. In Novosphingobium aromaticivorans (strain ATCC 700278 / DSM 12444 / CCUG 56034 / CIP 105152 / NBRC 16084 / F199), this protein is Glycogen synthase.